A 397-amino-acid chain; its full sequence is CCA-adding enzyme (397 aa).

The ATP site is built by Gly26 and Arg29. Residues Gly26 and Arg29 each contribute to the CTP site. Asp39 and Asp41 together coordinate Mg(2+). ATP contacts are provided by Arg110, Asp153, Arg156, Arg159, and Arg162. 5 residues coordinate CTP: Arg110, Asp153, Arg156, Arg159, and Arg162.

Belongs to the tRNA nucleotidyltransferase/poly(A) polymerase family. Bacterial CCA-adding enzyme type 3 subfamily. In terms of assembly, homodimer. Requires Mg(2+) as cofactor.

It catalyses the reaction a tRNA precursor + 2 CTP + ATP = a tRNA with a 3' CCA end + 3 diphosphate. The catalysed reaction is a tRNA with a 3' CCA end + 2 CTP + ATP = a tRNA with a 3' CCACCA end + 3 diphosphate. Functionally, catalyzes the addition and repair of the essential 3'-terminal CCA sequence in tRNAs without using a nucleic acid template. Adds these three nucleotides in the order of C, C, and A to the tRNA nucleotide-73, using CTP and ATP as substrates and producing inorganic pyrophosphate. tRNA 3'-terminal CCA addition is required both for tRNA processing and repair. Also involved in tRNA surveillance by mediating tandem CCA addition to generate a CCACCA at the 3' terminus of unstable tRNAs. While stable tRNAs receive only 3'-terminal CCA, unstable tRNAs are marked with CCACCA and rapidly degraded. This is CCA-adding enzyme from Bacillus cytotoxicus (strain DSM 22905 / CIP 110041 / 391-98 / NVH 391-98).